Reading from the N-terminus, the 271-residue chain is Short-chain dehydrogenase/reductase SAT3 (271 aa).

Positions 17, 40, and 67 each coordinate NADP(+). The active-site Proton donor is serine 153. 3 residues coordinate NADP(+): tyrosine 168, lysine 172, and serine 203. Tyrosine 168 functions as the Proton acceptor in the catalytic mechanism. The active-site Lowers pKa of active site Tyr is lysine 172.

Belongs to the short-chain dehydrogenases/reductases (SDR) family.

Its pathway is mycotoxin biosynthesis. Its function is as follows. Short-chain dehydrogenase/reductase; part of the satratoxin SC1 cluster involved in the biosynthesis of satratoxins, trichothecene mycotoxins that are associated with human food poisonings. Satratoxins are suggested to be made by products of multiple gene clusters (SC1, SC2 and SC3) that encode 21 proteins in all, including polyketide synthases, acetyltransferases, and other enzymes expected to modify the trichothecene skeleton. SC1 encodes 10 proteins, SAT1 to SAT10. The largest are SAT8, which encodes a putative polyketide synthase (PKS) with a conventional non-reducing architecture, and SAT10, a putative protein containing four ankyrin repeats and thus may be involved in protein scaffolding. The putative short-chain reductase SAT3 may assist the PKS in some capacity. SAT6 contains a secretory lipase domain and acts probably as a trichothecene esterase. SAT5 encodes a putative acetyltransferase, and so, with SAT6, may affect endogenous protection from toxicity. The probable transcription factor SAT9 may regulate the expression of the SC1 cluster. SC2 encodes proteins SAT11 to SAT16, the largest of which encodes the putative reducing PKS SAT13. SAT11 is a cytochrome P450 monooxygenase, while SAT14 and SAT16 are probable acetyltransferases. The SC2 cluster may be regulated by the transcription factor SAT15. SC3 is a small cluster that encodes 5 proteins, SAT17 to SAT21. SAT21 is a putative MFS-type transporter which may have a role in exporting secondary metabolites. The four other proteins putatively encoded in SC3 include the taurine hydroxylase-like protein SAT17, the O-methyltransferase SAT18, the acetyltransferase SAT19, and the Cys6-type zinc finger SAT20, the latter being probably involved in regulation of SC3 expression. The polypeptide is Short-chain dehydrogenase/reductase SAT3 (Stachybotrys chartarum (strain CBS 109288 / IBT 7711) (Toxic black mold)).